The primary structure comprises 690 residues: Proprotein convertase subtilisin/kexin type 9 (690 aa).

The signal sequence occupies residues 1 to 28 (MGTVRSRRLWWPLPLLLLLLLGPAGARA). Residues 29 to 150 (QEDDDGDYEE…IEEDSYVFAQ (122 aa)) constitute a propeptide that is removed on maturation. Position 36 is a sulfotyrosine (Tyr36). At Ser45 the chain carries Phosphoserine. The 73-residue stretch at 75 to 147 (TYVVVLKEET…VDYIEEDSYV (73 aa)) folds into the Inhibitor I9 domain. The Peptidase S8 domain maps to 153-459 (PWNLERITPA…GWQLFCRTVW (307 aa)). Residues Asp184 and His224 each act as charge relay system in the active site. Cystine bridges form between Cys221-Cys253 and Cys321-Cys356. Ser384 acts as the Charge relay system in catalysis. The segment at 448–690 (GAGWQLFCRT…HLAQASQELQ (243 aa)) is C-terminal domain. 3 disulfides stabilise this stretch: Cys455–Cys525, Cys475–Cys524, and Cys484–Cys507. The N-linked (GlcNAc...) asparagine glycan is linked to Asn531. 6 disulfide bridges follow: Cys532-Cys599, Cys550-Cys598, Cys560-Cys586, Cys606-Cys677, Cys624-Cys676, and Cys633-Cys652. Ser686 is modified (phosphoserine).

The protein belongs to the peptidase S8 family. As to quaternary structure, monomer. Can self-associate to form dimers and higher multimers which may have increased LDLR degrading activity. The precursor protein but not the mature protein may form multimers. Interacts with APOB, VLDLR, LRP8/APOER2 and BACE1. The full-length immature form (pro-PCSK9) interacts with SCNN1A, SCNN1B and SCNN1G. The pro-PCSK9 form (via C-terminal domain) interacts with LDLR. Interacts (via the C-terminal domain) with ANXA2 (via repeat Annexin 1); the interaction inhibits the degradation of LDLR. Ca(2+) serves as cofactor. In terms of processing, cleavage by furin and PCSK5 generates a truncated inactive protein that is unable to induce LDLR degradation. Undergoes autocatalytic cleavage in the endoplasmic reticulum to release the propeptide from the N-terminus and the cleavage of the propeptide is strictly required for its maturation and activation. The cleaved propeptide however remains associated with the catalytic domain through non-covalent interactions, preventing potential substrates from accessing its active site. As a result, it is secreted from cells as a propeptide-containing, enzymatically inactive protein. Post-translationally, phosphorylation protects the propeptide against proteolysis.

Its subcellular location is the cytoplasm. The protein resides in the secreted. It is found in the endosome. It localises to the lysosome. The protein localises to the cell surface. Its subcellular location is the endoplasmic reticulum. The protein resides in the golgi apparatus. Its proteolytic activity is autoinhibited by the non-covalent binding of the propeptide to the catalytic domain. Inhibited by EGTA. Its function is as follows. Crucial player in the regulation of plasma cholesterol homeostasis. Binds to low-density lipid receptor family members: low density lipoprotein receptor (LDLR), very low density lipoprotein receptor (VLDLR), apolipoprotein E receptor (LRP1/APOER) and apolipoprotein receptor 2 (LRP8/APOER2), and promotes their degradation in intracellular acidic compartments. Acts via a non-proteolytic mechanism to enhance the degradation of the hepatic LDLR through a clathrin LDLRAP1/ARH-mediated pathway. May prevent the recycling of LDLR from endosomes to the cell surface or direct it to lysosomes for degradation. Can induce ubiquitination of LDLR leading to its subsequent degradation. Inhibits intracellular degradation of APOB via the autophagosome/lysosome pathway in a LDLR-independent manner. Involved in the disposal of non-acetylated intermediates of BACE1 in the early secretory pathway. Inhibits epithelial Na(+) channel (ENaC)-mediated Na(+) absorption by reducing ENaC surface expression primarily by increasing its proteasomal degradation. Regulates neuronal apoptosis via modulation of LRP8/APOER2 levels and related anti-apoptotic signaling pathways. The protein is Proprotein convertase subtilisin/kexin type 9 (PCSK9) of Lagothrix lagotricha (Brown woolly monkey).